A 130-amino-acid chain; its full sequence is Small ribosomal subunit protein uS11 (130 aa).

Residues 109-130 (EDVTPIPHDGTGRPGGKRGRRV) form a disordered region.

Belongs to the universal ribosomal protein uS11 family. As to quaternary structure, part of the 30S ribosomal subunit.

In terms of biological role, located on the platform of the 30S subunit. The chain is Small ribosomal subunit protein uS11 from Methanosphaera stadtmanae (strain ATCC 43021 / DSM 3091 / JCM 11832 / MCB-3).